Here is a 321-residue protein sequence, read N- to C-terminus: Sialic acid-binding periplasmic protein SiaP (321 aa).

The N-terminal stretch at 1–22 (MKTINKITIAILTLSAAASVNA) is a signal peptide.

It belongs to the bacterial solute-binding protein 7 family. As to quaternary structure, the complex comprises the extracytoplasmic solute receptor protein SiaP, and the two transmembrane proteins SiaQ and SiaM.

It localises to the periplasm. Functionally, part of the tripartite ATP-independent periplasmic (TRAP) transport system SiaPQM that catalyzes unidirectional Na(+)-dependent sialic acid uptake. Binds the common sialic acid N-acetylneuraminic acid (Neu5Ac) with a high affinity. This is Sialic acid-binding periplasmic protein SiaP from Vibrio cholerae serotype O1 (strain ATCC 39315 / El Tor Inaba N16961).